The chain runs to 316 residues: tRNA dimethylallyltransferase (316 aa).

Residue 15 to 22 coordinates ATP; the sequence is GPTASGKS. Substrate is bound at residue 17–22; it reads TASGKS. An interaction with substrate tRNA region spans residues 40–43; it reads DSRQ.

The protein belongs to the IPP transferase family. Monomer. It depends on Mg(2+) as a cofactor.

It catalyses the reaction adenosine(37) in tRNA + dimethylallyl diphosphate = N(6)-dimethylallyladenosine(37) in tRNA + diphosphate. Its function is as follows. Catalyzes the transfer of a dimethylallyl group onto the adenine at position 37 in tRNAs that read codons beginning with uridine, leading to the formation of N6-(dimethylallyl)adenosine (i(6)A). This is tRNA dimethylallyltransferase from Chlorobium limicola (strain DSM 245 / NBRC 103803 / 6330).